The primary structure comprises 238 residues: Uridylate kinase (238 aa).

Residue 12-15 participates in ATP binding; it reads KVSG. G54 lines the UMP pocket. ATP contacts are provided by G55 and R59. UMP-binding positions include D74 and 135-142; that span reads TGNPYFTT. Positions 162, 163, 168, and 171 each coordinate ATP.

The protein belongs to the UMP kinase family. In terms of assembly, homohexamer.

Its subcellular location is the cytoplasm. It catalyses the reaction UMP + ATP = UDP + ADP. Its pathway is pyrimidine metabolism; CTP biosynthesis via de novo pathway; UDP from UMP (UMPK route): step 1/1. With respect to regulation, inhibited by UTP. Its function is as follows. Catalyzes the reversible phosphorylation of UMP to UDP. In Azorhizobium caulinodans (strain ATCC 43989 / DSM 5975 / JCM 20966 / LMG 6465 / NBRC 14845 / NCIMB 13405 / ORS 571), this protein is Uridylate kinase.